Here is a 248-residue protein sequence, read N- to C-terminus: tRNA (guanine-N(1)-)-methyltransferase (248 aa).

S-adenosyl-L-methionine is bound by residues Gly-113 and 133–138 (IGDFVL).

This sequence belongs to the RNA methyltransferase TrmD family. In terms of assembly, homodimer.

Its subcellular location is the cytoplasm. It catalyses the reaction guanosine(37) in tRNA + S-adenosyl-L-methionine = N(1)-methylguanosine(37) in tRNA + S-adenosyl-L-homocysteine + H(+). Specifically methylates guanosine-37 in various tRNAs. In Dehalococcoides mccartyi (strain ATCC BAA-2100 / JCM 16839 / KCTC 5957 / BAV1), this protein is tRNA (guanine-N(1)-)-methyltransferase.